The primary structure comprises 247 residues: GTP cyclohydrolase 1 type 2 homolog (247 aa).

Residues H63, H64, D101, H215, and E219 each contribute to the a divalent metal cation site.

It belongs to the GTP cyclohydrolase I type 2/NIF3 family. In terms of assembly, homohexamer.

The polypeptide is GTP cyclohydrolase 1 type 2 homolog (Buchnera aphidicola subsp. Acyrthosiphon pisum (strain APS) (Acyrthosiphon pisum symbiotic bacterium)).